The primary structure comprises 259 residues: Imidazole glycerol phosphate synthase subunit HisF (259 aa).

Active-site residues include Asp11 and Asp130.

Belongs to the HisA/HisF family. In terms of assembly, heterodimer of HisH and HisF.

It localises to the cytoplasm. The catalysed reaction is 5-[(5-phospho-1-deoxy-D-ribulos-1-ylimino)methylamino]-1-(5-phospho-beta-D-ribosyl)imidazole-4-carboxamide + L-glutamine = D-erythro-1-(imidazol-4-yl)glycerol 3-phosphate + 5-amino-1-(5-phospho-beta-D-ribosyl)imidazole-4-carboxamide + L-glutamate + H(+). It participates in amino-acid biosynthesis; L-histidine biosynthesis; L-histidine from 5-phospho-alpha-D-ribose 1-diphosphate: step 5/9. Functionally, IGPS catalyzes the conversion of PRFAR and glutamine to IGP, AICAR and glutamate. The HisF subunit catalyzes the cyclization activity that produces IGP and AICAR from PRFAR using the ammonia provided by the HisH subunit. The protein is Imidazole glycerol phosphate synthase subunit HisF of Shewanella amazonensis (strain ATCC BAA-1098 / SB2B).